The following is a 385-amino-acid chain: Probable peptidoglycan glycosyltransferase FtsW (385 aa).

Helical transmembrane passes span 18–38 (LLWT…SASL), 57–77 (IYLA…PLAL), 81–101 (LRFV…IPGL), 111–131 (WIAL…CFVL), 157–177 (LLGV…VVVL), 195–215 (FLLI…AEPY), 280–300 (LGLL…WRVF), 311–331 (LLYH…QAFI), and 347–367 (LPFI…VGLI).

Belongs to the SEDS family. FtsW subfamily.

It is found in the cell inner membrane. The catalysed reaction is [GlcNAc-(1-&gt;4)-Mur2Ac(oyl-L-Ala-gamma-D-Glu-L-Lys-D-Ala-D-Ala)](n)-di-trans,octa-cis-undecaprenyl diphosphate + beta-D-GlcNAc-(1-&gt;4)-Mur2Ac(oyl-L-Ala-gamma-D-Glu-L-Lys-D-Ala-D-Ala)-di-trans,octa-cis-undecaprenyl diphosphate = [GlcNAc-(1-&gt;4)-Mur2Ac(oyl-L-Ala-gamma-D-Glu-L-Lys-D-Ala-D-Ala)](n+1)-di-trans,octa-cis-undecaprenyl diphosphate + di-trans,octa-cis-undecaprenyl diphosphate + H(+). The protein operates within cell wall biogenesis; peptidoglycan biosynthesis. In terms of biological role, peptidoglycan polymerase that is essential for cell division. In Alcanivorax borkumensis (strain ATCC 700651 / DSM 11573 / NCIMB 13689 / SK2), this protein is Probable peptidoglycan glycosyltransferase FtsW.